The chain runs to 110 residues: Insulin (110 aa).

An N-terminal signal peptide occupies residues 1-24 (MALWMRLLPLLAFLILWEPSPAHA). Cystine bridges form between Cys31–Cys96, Cys43–Cys109, and Cys95–Cys100. Residues 57-87 (GVDDPQMPQLELGGSPGAGDLRALALEVARQ) constitute a propeptide, c peptide.

This sequence belongs to the insulin family. As to quaternary structure, heterodimer of a B chain and an A chain linked by two disulfide bonds.

The protein resides in the secreted. In terms of biological role, insulin decreases blood glucose concentration. It increases cell permeability to monosaccharides, amino acids and fatty acids. It accelerates glycolysis, the pentose phosphate cycle, and glycogen synthesis in liver. This is Insulin (INS) from Psammomys obesus (Fat sand rat).